The following is a 187-amino-acid chain: MRVYHSNNFRSGRKIIFEKEPCLIESSEFVKPGKGQSFVRVKLRKLLTKQLIEKTFKSTDSLEIADVSEYTLSYLYNDGHFWYFINNNFEELSVDKKIVGVNKKWLSEQDTCVITFWNNQAISITPNIFVELKVIDTEIALKSDTINTTTKLATLSTGAILKVPLFIQIGSLIKVDTRSGEYVSRIK.

Residue K34 is modified to N6-(3,6-diaminohexanoyl)-5-hydroxylysine.

The protein belongs to the elongation factor P family. Post-translationally, may be beta-lysylated on the epsilon-amino group of Lys-34 by the combined action of EpmA and EpmB, and then hydroxylated on the C5 position of the same residue by EpmC (if this protein is present). Lysylation is critical for the stimulatory effect of EF-P on peptide-bond formation. The lysylation moiety may extend toward the peptidyltransferase center and stabilize the terminal 3-CCA end of the tRNA. Hydroxylation of the C5 position on Lys-34 may allow additional potential stabilizing hydrogen-bond interactions with the P-tRNA.

It is found in the cytoplasm. It functions in the pathway protein biosynthesis; polypeptide chain elongation. Its function is as follows. Involved in peptide bond synthesis. Alleviates ribosome stalling that occurs when 3 or more consecutive Pro residues or the sequence PPG is present in a protein, possibly by augmenting the peptidyl transferase activity of the ribosome. Modification of Lys-34 is required for alleviation. In Buchnera aphidicola subsp. Schizaphis graminum (strain Sg), this protein is Elongation factor P.